A 109-amino-acid polypeptide reads, in one-letter code: Thioredoxin (109 aa).

One can recognise a Thioredoxin domain in the interval glutamate 2–lysine 109. Cysteine 27 and cysteine 30 are oxidised to a cystine.

This sequence belongs to the thioredoxin family.

In terms of biological role, participates in various redox reactions through the reversible oxidation of its active center dithiol to a disulfide and catalyzes dithiol-disulfide exchange reactions. The sequence is that of Thioredoxin (trxA) from Mycoplasmopsis pulmonis (strain UAB CTIP) (Mycoplasma pulmonis).